We begin with the raw amino-acid sequence, 572 residues long: MEENIVSENNMKHRSSVYDSMVKSPNRAMLRATGMTDDSFEKPIVGVISTWAENTPCNIHLHGFGQIAKEGVKDAGAWPVQFGTITVADGIAMGTPGMRFSLTSRDIIADSIEAAMGGHNVDAFVAIGGCDKNMPGSMIAIANMDIPAIFAYGGTIAPGNLNGKDIDLVSVFEGIGKWNHGDMTAEEVKNLECNACPGPGGCGGMYTANTMATAIEVMGMSLPGSSSHPAESAEKKADIEEAGRAVVKMLEMGLKPSDILTREAFEDAITVTMALGGSTNATLHLLAIAHAANVDLTLEDFNDFQERVPHLADLKPSGQYVFQDLYNVGGVPAVMKYLLKNGFLHGDRITCTGKTVAENLEAFDDLTPGQKVIMPLENPKRADGPLIILKGNLAPEGAVAKVSGVKVRNITGPAKVFDSEEDAIEAVLSDEIVDGDVVVVRFVGPKGGPGMPEMLSLSSMIVGKGQGDKVALLTDGRFSGGTYGLVVGHIAPEAQVGGPIAYLRTGDMVTVDQDTKEITMHVPDEELAKRKAETELPPLYSRGVLGKYAHIVSSASRGAVTDFWNMDKSGKA.

Residue Cys-57 coordinates [2Fe-2S] cluster. Asp-89 is a binding site for Mg(2+). Cys-130 provides a ligand contact to [2Fe-2S] cluster. Mg(2+) is bound by residues Asp-131 and Lys-132. Lys-132 is modified (N6-carboxylysine). Position 202 (Cys-202) interacts with [2Fe-2S] cluster. Residue Glu-453 participates in Mg(2+) binding. Ser-479 acts as the Proton acceptor in catalysis.

It belongs to the IlvD/Edd family. In terms of assembly, homodimer. The cofactor is [2Fe-2S] cluster. Mg(2+) serves as cofactor.

It carries out the reaction (2R)-2,3-dihydroxy-3-methylbutanoate = 3-methyl-2-oxobutanoate + H2O. The enzyme catalyses (2R,3R)-2,3-dihydroxy-3-methylpentanoate = (S)-3-methyl-2-oxopentanoate + H2O. It participates in amino-acid biosynthesis; L-isoleucine biosynthesis; L-isoleucine from 2-oxobutanoate: step 3/4. It functions in the pathway amino-acid biosynthesis; L-valine biosynthesis; L-valine from pyruvate: step 3/4. In terms of biological role, functions in the biosynthesis of branched-chain amino acids. Catalyzes the dehydration of (2R,3R)-2,3-dihydroxy-3-methylpentanoate (2,3-dihydroxy-3-methylvalerate) into 2-oxo-3-methylpentanoate (2-oxo-3-methylvalerate) and of (2R)-2,3-dihydroxy-3-methylbutanoate (2,3-dihydroxyisovalerate) into 2-oxo-3-methylbutanoate (2-oxoisovalerate), the penultimate precursor to L-isoleucine and L-valine, respectively. The sequence is that of Dihydroxy-acid dehydratase from Streptococcus thermophilus (strain CNRZ 1066).